A 378-amino-acid chain; its full sequence is Alpha-D-ribose 1-methylphosphonate 5-triphosphate diphosphatase (378 aa).

It belongs to the metallo-dependent hydrolases superfamily.

It catalyses the reaction alpha-D-ribose 1-methylphosphonate 5-triphosphate + H2O = alpha-D-ribose 1-methylphosphonate 5-phosphate + diphosphate + H(+). In terms of biological role, catalyzes the hydrolysis of alpha-D-ribose 1-methylphosphonate triphosphate (RPnTP) to form alpha-D-ribose 1-methylphosphonate phosphate (PRPn) and diphosphate. The polypeptide is Alpha-D-ribose 1-methylphosphonate 5-triphosphate diphosphatase (phnM) (Escherichia coli (strain K12)).